Consider the following 328-residue polypeptide: MAWPLVGAFLCGHLLGFVCLSGLAVEVTVPTEPLSVPKGKTAELSCSYKTSVGDNFALEWSFVQPGKPISASVPVLYFTNGHLYPTGSKADRAILLHDPPTGGLATLKLTDLRPSDTGTYLCNVNNPPDFYTNGLGLINLTVLVPPSHPLCSQSGQTSVGGSAALGCRSSEGAPKPVYNWERLGSSPTPPPGSMVQDEVSGQLILTNLSLTSSGTYRCVASNQMGSASCELNLSVTDSSEGRVAGTLIGVLLGVLLLSVAAFCLIRFQKERKKEPKETYGGSDLREDATAPGVFEQASMRADHSKELLEKSPCASTMTTTKSKLSMVV.

Residues Met-1–Ala-24 form the signal peptide. Residues Val-25–Ile-138 form the Ig-like V-type domain. Residues Val-25 to Ala-244 lie on the Extracellular side of the membrane. Residues Cys-46 and Cys-122 are joined by a disulfide bond. 3 N-linked (GlcNAc...) asparagine glycosylation sites follow: Asn-139, Asn-207, and Asn-232. One can recognise an Ig-like C2-type domain in the interval Pro-145 to Ser-234. Cysteines 167 and 218 form a disulfide. Residues Gly-245–Ile-265 traverse the membrane as a helical segment. The Cytoplasmic portion of the chain corresponds to Arg-266–Val-328.

As to expression, expressed in the stomach, colon and prostate.

It localises to the membrane. This chain is V-set and immunoglobulin domain-containing protein 2 (Vsig2), found in Mus musculus (Mouse).